Reading from the N-terminus, the 499-residue chain is Potassium voltage-gated channel subfamily A member 2 (499 aa).

The disordered stretch occupies residues 1 to 26 (MTVATGDPVDEAAALPGHPQDTYDPE). A tetramerization domain region spans residues 1–125 (MTVATGDPVD…YELGEEAMEM (125 aa)). The Cytoplasmic segment spans residues 1-160 (MTVATGDPVD…LLFEYPESSG (160 aa)). A helical membrane pass occupies residues 161 to 182 (PARIIAIVSVMVILISIVSFCL). Topologically, residues 183 to 221 (ETLPIFRDENEDMHGGGVTFHTYSNSTIGYQQSTSFTDP) are extracellular. N-linked (GlcNAc...) asparagine glycosylation occurs at asparagine 207. A helical transmembrane segment spans residues 222–243 (FFIVETLCIIWFSFEFLVRFFA). Cysteine 244 is lipidated: S-palmitoyl cysteine. Residues 244 to 254 (CPSKAGFFTNI) lie on the Cytoplasmic side of the membrane. A helical membrane pass occupies residues 255-275 (MNIIDIVAIIPYFITLGTELA). Topologically, residues 276–289 (EKPEDAQQGQQAMS) are extracellular. Residues 290–310 (LAILRVIRLVRVFRIFKLSRH) traverse the membrane as a helical; Voltage-sensor segment. Topologically, residues 311–325 (SKGLQILGQTLKASM) are cytoplasmic. Positions 312 to 325 (KGLQILGQTLKASM) are S4-S5 linker. Residues 326 to 347 (RELGLLIFFLFIGVILFSSAVY) form a helical membrane-spanning segment. Over 348–361 (FAEADERDSQFPSI) the chain is Extracellular. An intramembrane region (helical) is located at residues 362-373 (PDAFWWAVVSMT). A Selectivity filter motif is present at residues 374-379 (TVGYGD). The stretch at 374-381 (TVGYGDMV) is an intramembrane region. Over 382-388 (PTTIGGK) the chain is Extracellular. A helical membrane pass occupies residues 389-417 (IVGSLCAIAGVLTIALPVPVIVSNFNYFY). The Cytoplasmic segment spans residues 418–499 (HRETEGEEQA…VNITKMLTDV (82 aa)). Tyrosine 429 carries the post-translational modification Phosphotyrosine. 4 positions are modified to phosphoserine: serine 434, serine 440, serine 441, and serine 449. Tyrosine 458 carries the phosphotyrosine modification. Residue serine 468 is modified to Phosphoserine. The short motif at 497–499 (TDV) is the PDZ-binding element.

Belongs to the potassium channel family. A (Shaker) (TC 1.A.1.2) subfamily. Kv1.2/KCNA2 sub-subfamily. In terms of assembly, homotetramer and heterotetramer with other channel-forming alpha subunits, such as KCNA1, KCNA4, KCNA5, KCNA6 and KCNA7. Channel activity is regulated by interaction with beta subunits, including KCNAB1 and KCNAB2. Identified in a complex with KCNA1 and KCNAB2. Identified in a complex with KCNA5 and KCNAB1. Identified in a complex with KCNA4 and FYN. Interacts with PTK2B. Interacts (via C-terminus) with CTTN. Interacts with ADAM22. Interacts with CNTNAP2. Interacts (via C-terminus) with the PDZ domains of DLG1, DLG2 and DLG4. Interacts (via N-terminal cytoplasmic domain) with RHOA (GTP-bound form); this regulates channel activity by reducing location at the cell surface in response to CHRM1 activation. Interacts with DRD2. Interacts with SIGMAR1; cocaine consumption leads to increased interaction. Interacts with ADAM11. Interacts with LYNX1. In terms of processing, phosphorylated on tyrosine residues; phosphorylation increases in response to ischemia. Phosphorylated on tyrosine residues by activated PTK2B/PYK2. Phosphorylation on tyrosine residues suppresses ion channel activity. Phosphorylated on tyrosine residues in response to CHRM1 activation; this abolishes interaction with CTTN. This is probably due to endocytosis of the phosphorylated channel subunits. Phosphorylated on serine residues in response to increased cAMP levels; phosphorylation is apparently not catalyzed by PKA. N-glycosylated, with complex, sialylated N-glycans. As to expression, detected in brain. Detected in cerebellum. Detected in mitral cells in the olfactory bulb. Detected in cochlea. Detected in cerebellum, particularly in the basket cell axon plexus and in the terminal regions around Purkinje cells (at protein level). Detected in juxtaparanodal regions in sciatic nerve. Detected in Schwann cells from sciatic nerve. Detected in dopamine neurons in substantia nigra. Detected in large myelinated fibers in juxtaparanodes in the CA3 and CA1 areas of the hippocampus. Detected in brain, in punctae on fiber tracts in brain stem and spinal cord, and on axons in the juxtaparanodal regions of the node of Ranvier (at protein level). Detected in dopamine neurons in the midbrain.

The protein localises to the cell membrane. It is found in the membrane. Its subcellular location is the cell projection. The protein resides in the axon. It localises to the synapse. The protein localises to the endoplasmic reticulum membrane. It is found in the lamellipodium membrane. Its subcellular location is the synaptosome. The protein resides in the presynaptic cell membrane. It localises to the dendrite. The protein localises to the perikaryon. It is found in the cell junction. Its subcellular location is the paranodal septate junction. It carries out the reaction K(+)(in) = K(+)(out). Its activity is regulated as follows. Inhibited by 4-aminopyridine (4-AP), dendrotoxin (DTX) and charybdotoxin (CTX), but not by tetraethylammonium (TEA). Inhibited by tityustoxin-K alpha (TsTX-Kalpha), a toxin that is highly specific for KCNA2. Inhibited by maurotoxin. Inhibited by kappaM conotoxins kappaM-RIIIJ and kappaM-RIIIK. Functionally, voltage-gated potassium channel that mediates transmembrane potassium transport in excitable membranes, primarily in the brain and the central nervous system, but also in the cardiovascular system. Prevents aberrant action potential firing and regulates neuronal output. Forms tetrameric potassium-selective channels through which potassium ions pass in accordance with their electrochemical gradient. The channel alternates between opened and closed conformations in response to the voltage difference across the membrane. Can form functional homotetrameric channels and heterotetrameric channels that contain variable proportions of KCNA1, KCNA2, KCNA4, KCNA5, KCNA6, KCNA7, and possibly other family members as well; channel properties depend on the type of alpha subunits that are part of the channel. Channel properties are modulated by cytoplasmic beta subunits that regulate the subcellular location of the alpha subunits and promote rapid inactivation of delayed rectifier potassium channels. In vivo, membranes probably contain a mixture of heteromeric potassium channel complexes, making it difficult to assign currents observed in intact tissues to any particular potassium channel family member. Homotetrameric KCNA2 forms a delayed-rectifier potassium channel that opens in response to membrane depolarization, followed by slow spontaneous channel closure. In contrast, a heteromultimer formed by KCNA2 and KCNA4 shows rapid inactivation. Contributes to the regulation of action potentials in neurons. KCNA2-containing channels play a presynaptic role and prevent hyperexcitability and aberrant action potential firing. Response to toxins that are selective for KCNA1, respectively for KCNA2, suggests that heteromeric potassium channels composed of both KCNA1 and KCNA2 play a role in pacemaking and regulate the output of deep cerebellar nuclear neurons. Response to toxins that are selective for KCNA2-containing potassium channels suggests that in Purkinje cells, dendritic subthreshold KCNA2-containing potassium channels prevent random spontaneous calcium spikes, suppressing dendritic hyperexcitability without hindering the generation of somatic action potentials, and thereby play an important role in motor coordination. KCNA2-containing channels play a role in GABAergic transmission from basket cells to Purkinje cells in the cerebellum, and thereby play an import role in motor coordination. Plays a role in the induction of long-term potentiation of neuron excitability in the CA3 layer of the hippocampus. May function as down-stream effector for G protein-coupled receptors and inhibit GABAergic inputs to basolateral amygdala neurons. May contribute to the regulation of neurotransmitter release, such as gamma-aminobutyric acid (GABA). Contributes to the regulation of the axonal release of the neurotransmitter dopamine. Reduced KCNA2 expression plays a role in the perception of neuropathic pain after peripheral nerve injury, but not acute pain. Plays a role in the regulation of the time spent in non-rapid eye movement (NREM) sleep. The protein is Potassium voltage-gated channel subfamily A member 2 (Kcna2) of Mus musculus (Mouse).